The sequence spans 121 residues: Large ribosomal subunit protein bL12 (121 aa).

Belongs to the bacterial ribosomal protein bL12 family. Homodimer. Part of the ribosomal stalk of the 50S ribosomal subunit. Forms a multimeric L10(L12)X complex, where L10 forms an elongated spine to which 2 to 4 L12 dimers bind in a sequential fashion. Binds GTP-bound translation factors.

Its function is as follows. Forms part of the ribosomal stalk which helps the ribosome interact with GTP-bound translation factors. Is thus essential for accurate translation. The polypeptide is Large ribosomal subunit protein bL12 (Baumannia cicadellinicola subsp. Homalodisca coagulata).